The primary structure comprises 332 residues: Glyceraldehyde-3-phosphate dehydrogenase (332 aa).

NAD(+)-binding positions include 12–13, aspartate 34, lysine 78, and threonine 120; that span reads RI. D-glyceraldehyde 3-phosphate-binding positions include 149 to 151, threonine 180, 209 to 210, and arginine 232; these read SCT and TG. Cysteine 150 functions as the Nucleophile in the catalytic mechanism. An NAD(+)-binding site is contributed by asparagine 314.

Belongs to the glyceraldehyde-3-phosphate dehydrogenase family. In terms of assembly, homotetramer.

The protein resides in the cytoplasm. It catalyses the reaction D-glyceraldehyde 3-phosphate + phosphate + NAD(+) = (2R)-3-phospho-glyceroyl phosphate + NADH + H(+). It participates in carbohydrate degradation; glycolysis; pyruvate from D-glyceraldehyde 3-phosphate: step 1/5. Catalyzes the oxidative phosphorylation of glyceraldehyde 3-phosphate (G3P) to 1,3-bisphosphoglycerate (BPG) using the cofactor NAD. The first reaction step involves the formation of a hemiacetal intermediate between G3P and a cysteine residue, and this hemiacetal intermediate is then oxidized to a thioester, with concomitant reduction of NAD to NADH. The reduced NADH is then exchanged with the second NAD, and the thioester is attacked by a nucleophilic inorganic phosphate to produce BPG. This chain is Glyceraldehyde-3-phosphate dehydrogenase (gapA), found in Buchnera aphidicola subsp. Schizaphis graminum (strain Sg).